A 122-amino-acid polypeptide reads, in one-letter code: Spermidine export protein MdtJ (122 aa).

The next 4 membrane-spanning stretches (helical) occupy residues 1 to 21 (MIYW…TLSM), 31 to 51 (TGHI…SMAV), 54 to 74 (VALG…ITLF), and 81 to 101 (EPIS…IMLV).

This sequence belongs to the drug/metabolite transporter (DMT) superfamily. Small multidrug resistance (SMR) (TC 2.A.7.1) family. MdtJ subfamily. Forms a complex with MdtI.

The protein resides in the cell inner membrane. In terms of biological role, catalyzes the excretion of spermidine. This is Spermidine export protein MdtJ from Serratia proteamaculans (strain 568).